Consider the following 698-residue polypeptide: DNA ligase (698 aa).

NAD(+)-binding positions include 47-51, 96-97, and E128; these read DAQYD and SL. The active-site N6-AMP-lysine intermediate is K130. Residues R151, E186, K303, and K327 each contribute to the NAD(+) site. Residues C422, C425, C440, and C446 each coordinate Zn(2+). A BRCT domain is found at 620–698; sequence GDNLLLSNQT…EEEWIKMVNE (79 aa).

It belongs to the NAD-dependent DNA ligase family. LigA subfamily. Mg(2+) serves as cofactor. Requires Mn(2+) as cofactor.

It catalyses the reaction NAD(+) + (deoxyribonucleotide)n-3'-hydroxyl + 5'-phospho-(deoxyribonucleotide)m = (deoxyribonucleotide)n+m + AMP + beta-nicotinamide D-nucleotide.. Its function is as follows. DNA ligase that catalyzes the formation of phosphodiester linkages between 5'-phosphoryl and 3'-hydroxyl groups in double-stranded DNA using NAD as a coenzyme and as the energy source for the reaction. It is essential for DNA replication and repair of damaged DNA. This Orientia tsutsugamushi (strain Boryong) (Rickettsia tsutsugamushi) protein is DNA ligase.